Reading from the N-terminus, the 540-residue chain is Pentatricopeptide repeat-containing protein At1g80880, mitochondrial (540 aa).

The N-terminal 87 residues, 1–87, are a transit peptide targeting the mitochondrion; it reads MAAIVAIGRK…ETFDINLTAL (87 aa). PPR repeat units follow at residues 154–184, 188–222, 223–253, 257–292, 293–327, 328–362, 363–397, 402–428, 429–463, and 464–498; these read DQKS…MFNV, TRKA…KHTP, YDEA…SKKL, DVEG…CITP, NKDS…GLAP, GIEV…GLKP, DSVT…NLSP, FHAF…DLGP, TEET…EIVA, and NPAL…GFVG. The segment at 514–540 is disordered; that stretch reads VRKSKRMNLQKVGSQEGYKGQRSVDRK.

This sequence belongs to the PPR family. P subfamily.

It is found in the mitochondrion. The chain is Pentatricopeptide repeat-containing protein At1g80880, mitochondrial from Arabidopsis thaliana (Mouse-ear cress).